Consider the following 728-residue polypeptide: Catalase-peroxidase (728 aa).

An N-terminal signal peptide occupies residues methionine 1 to glycine 16. The interval methionine 1 to aspartate 26 is disordered. The tryptophyl-tyrosyl-methioninium (Trp-Tyr) (with M-244) cross-link spans tryptophan 96 to tyrosine 218. The active-site Proton acceptor is histidine 97. Residues tyrosine 218–methionine 244 constitute a cross-link (tryptophyl-tyrosyl-methioninium (Tyr-Met) (with W-96)). Histidine 259 contacts heme b.

It belongs to the peroxidase family. Peroxidase/catalase subfamily. In terms of assembly, homodimer or homotetramer. Requires heme b as cofactor. In terms of processing, formation of the three residue Trp-Tyr-Met cross-link is important for the catalase, but not the peroxidase activity of the enzyme.

It carries out the reaction H2O2 + AH2 = A + 2 H2O. It catalyses the reaction 2 H2O2 = O2 + 2 H2O. Its function is as follows. Bifunctional enzyme with both catalase and broad-spectrum peroxidase activity. In Rhizobium leguminosarum bv. phaseoli, this protein is Catalase-peroxidase.